Reading from the N-terminus, the 108-residue chain is Large ribosomal subunit protein uL24 (108 aa).

It belongs to the universal ribosomal protein uL24 family. As to quaternary structure, part of the 50S ribosomal subunit.

In terms of biological role, one of two assembly initiator proteins, it binds directly to the 5'-end of the 23S rRNA, where it nucleates assembly of the 50S subunit. Its function is as follows. One of the proteins that surrounds the polypeptide exit tunnel on the outside of the subunit. This is Large ribosomal subunit protein uL24 from Citrifermentans bemidjiense (strain ATCC BAA-1014 / DSM 16622 / JCM 12645 / Bem) (Geobacter bemidjiensis).